Reading from the N-terminus, the 466-residue chain is Glutamate decarboxylase alpha (466 aa).

Thr62 and Asn83 together coordinate substrate. Pyridoxal 5'-phosphate contacts are provided by residues 126 to 127 (SS), Thr212, and His275. Position 276 is an N6-(pyridoxal phosphate)lysine (Lys276).

The protein belongs to the group II decarboxylase family. Homohexamer. It depends on pyridoxal 5'-phosphate as a cofactor.

It catalyses the reaction L-glutamate + H(+) = 4-aminobutanoate + CO2. Its function is as follows. Converts glutamate to gamma-aminobutyrate (GABA), consuming one intracellular proton in the reaction. The gad system helps to maintain a near-neutral intracellular pH when cells are exposed to extremely acidic conditions. The ability to survive transit through the acidic conditions of the stomach is essential for successful colonization of the mammalian host by commensal and pathogenic bacteria. The protein is Glutamate decarboxylase alpha (gadA) of Escherichia coli O6:H1 (strain CFT073 / ATCC 700928 / UPEC).